A 167-amino-acid polypeptide reads, in one-letter code: Urease accessory protein UreE (167 aa).

A disordered region spans residues 135–167 (SGAYGGGHHHSHSHHEGDEFHSKPRLHHFGGSQ). Residues 157–167 (KPRLHHFGGSQ) show a composition bias toward basic residues.

It belongs to the UreE family.

It localises to the cytoplasm. In terms of biological role, involved in urease metallocenter assembly. Binds nickel. Probably functions as a nickel donor during metallocenter assembly. This Nitrosococcus oceani (strain ATCC 19707 / BCRC 17464 / JCM 30415 / NCIMB 11848 / C-107) protein is Urease accessory protein UreE.